The primary structure comprises 792 residues: MAAPSLLNWRRVSSFTGPVPRARHGHRAVAIRELMIIFGGGNEGIADELHVYNTATNQWFLPAVRGDIPPGCAAHGFVCDGTRILVFGGMVEYGRYSNELYELQASRWLWKKVKPHPPPSGLPPCPRLGHSFSLYGNKCYLFGGLANESEDSNNNVPRYLNDFYELELQHGSGVVGWSIPVTKGVVPSPRESHTAVIYCKKDSGSPKMYVFGGMCGARLDDLWQLDLETMSWSKPETKGTVPLPRSLHTASVIGNKMYIFGGWVPHKGENTETSPHDCEWRCTSSFSYLNLDTTEWTTLVSDSQEDKKNSRPRPRAGHCAVAIGTRLYFWSGRDGYKKALNSQVCCKDLWYLDTEKPPAPSQVQLIKATTNSFHVKWDEVSTVEGYLLQLSTDLPYQAASSDSSAAPNMQGVRMDPHRQGSNNIVPNSINDTINSTKTEQPATKETSMKNKPDFKALTDSNAILYPSLASNASNHNSHVVDMLRKNEGPHTSANVGVLSSCLDVRTVIPETSVSSTVSSTQTMVTQQTIKTESSSTNGAVVKDETSLTTFSTKSEVDETYALPATKISRVETHATATPFSKETPSNPVATVKAGERQWCDVGIFKNNTALVSQFYLLPKGKQSISKVGNADVPDYSLLKKQDLVPGTGYRFRVAAINGCGIGPFSKISEFKTCIPGFPGAPSAVRISKNVEGIHLSWEPPTSPSGNILEYSAYLAIRTAQIQDNPSQLVFMRIYCGLKTSCIVTAGQLANAHIDYTSRPAIVFRISAKNEKGYGPATQVRWLQGNNKKAPLN.

Kelch repeat units lie at residues 34 to 79, 83 to 130, 207 to 255, and 257 to 303; these read LMII…GFVC, RILV…RLGH, KMYV…VIGN, and MYIF…VSDS. A Fibronectin type-III 1 domain is found at 359–449; it reads APSQVQLIKA…QPATKETSMK (91 aa). The disordered stretch occupies residues 399–447; sequence ASSDSSAAPNMQGVRMDPHRQGSNNIVPNSINDTINSTKTEQPATKETS. The segment covering 419–445 has biased composition (polar residues); it reads QGSNNIVPNSINDTINSTKTEQPATKE. K553 is covalently cross-linked (Glycyl lysine isopeptide (Lys-Gly) (interchain with G-Cter in SUMO2)). Fibronectin type-III domains lie at 583–675 and 677–787; these read TPSN…TCIP and FPGA…GNNK.

In terms of assembly, binds KMT2A/MLL1. Component of the MLL1/MLL complex, at least composed of KMT2A/MLL1, ASH2L, RBBP5, DPY30, WDR5, MEN1, HCFC1 and HCFC2. Interacts with TASOR. As to expression, highly expressed in testis. Detected at lower levels in spleen, thymus, prostate, ovary, small intestine and colon.

The protein localises to the cytoplasm. It is found in the nucleus. The polypeptide is Host cell factor 2 (HCFC2) (Homo sapiens (Human)).